The chain runs to 90 residues: Putative beta-neurotoxin RjAa2f (90 aa).

Positions 1–18 are cleaved as a signal peptide; it reads MKILIFIIASFMLIGVEC. The region spanning 19–89 is the LCN-type CS-alpha/beta domain; it reads KEGYPMGSDG…VWDSKTNKCG (71 aa). 4 disulfides stabilise this stretch: C29–C88, C33–C62, C40–C69, and C44–C71.

It belongs to the long (4 C-C) scorpion toxin superfamily. Sodium channel inhibitor family. Beta subfamily. Expressed by the venom gland.

It localises to the secreted. Beta toxins bind voltage-independently at site-4 of sodium channels (Nav) and shift the voltage of activation toward more negative potentials thereby affecting sodium channel activation and promoting spontaneous and repetitive firing. In Rhopalurus junceus (Caribbean blue scorpion), this protein is Putative beta-neurotoxin RjAa2f.